Here is a 230-residue protein sequence, read N- to C-terminus: 2,3-bisphosphoglycerate-dependent phosphoglycerate mutase 1 (230 aa).

Residues 8–15 (RHGQSEWN), 21–22 (TG), Arg60, 87–90 (ERHY), Lys98, 114–115 (RR), and 183–184 (GN) each bind substrate. Catalysis depends on His9, which acts as the Tele-phosphohistidine intermediate. The Proton donor/acceptor role is filled by Glu87.

It belongs to the phosphoglycerate mutase family. BPG-dependent PGAM subfamily.

The enzyme catalyses (2R)-2-phosphoglycerate = (2R)-3-phosphoglycerate. The protein operates within carbohydrate degradation; glycolysis; pyruvate from D-glyceraldehyde 3-phosphate: step 3/5. Catalyzes the interconversion of 2-phosphoglycerate and 3-phosphoglycerate. This is 2,3-bisphosphoglycerate-dependent phosphoglycerate mutase 1 from Lactobacillus johnsonii (strain CNCM I-12250 / La1 / NCC 533).